Here is a 318-residue protein sequence, read N- to C-terminus: Phosphate acetyltransferase (318 aa).

It belongs to the phosphate acetyltransferase and butyryltransferase family.

The protein resides in the cytoplasm. It carries out the reaction acetyl-CoA + phosphate = acetyl phosphate + CoA. It functions in the pathway metabolic intermediate biosynthesis; acetyl-CoA biosynthesis; acetyl-CoA from acetate: step 2/2. The protein is Phosphate acetyltransferase (pta) of Paracoccus denitrificans.